Here is a 587-residue protein sequence, read N- to C-terminus: Leucine-rich repeat-containing protein 63 (587 aa).

LRR repeat units lie at residues 251–274, 344–367, 368–390, 392–413, 414–436, 437–459, and 487–510; these read QSVIETLVTENGNIESVPKQIPPR, AFQLIYLNLSFNDLHYFPTEILCL, KNLQILKLRNNPIKEIPSEIQQL, FLRIFTIAFNLITVLPIGLFSL, SYLEELDVSYNELTFIPNEIQKL, RSLEKLTVDGNELSFFPHGILKL, and LTQIISLFIVQNKLHKFYDKIPVE.

The protein is Leucine-rich repeat-containing protein 63 (LRRC63) of Homo sapiens (Human).